The sequence spans 116 residues: MRHSCRVPKLGKPTDQRRALLRSLATQLIRHGQIKTTKPRAKAVQSEVERMITLAKDGSLAARRRALGYLYDKKLVHSLFNEAQERYGSRNGGYTRVLRTIRRRGDNAEMAIIELI.

It belongs to the bacterial ribosomal protein bL17 family. As to quaternary structure, part of the 50S ribosomal subunit. Contacts protein L32.

This Trichodesmium erythraeum (strain IMS101) protein is Large ribosomal subunit protein bL17.